The chain runs to 544 residues: D-2-hydroxyglutarate dehydrogenase, mitochondrial (544 aa).

A mitochondrion-targeting transit peptide spans 1–10 (MMMPRLVPRW). In terms of domain architecture, FAD-binding PCMH-type spans 119–298 (VRGSSKVLLR…TAVSILCPPK (180 aa)). K124 carries the post-translational modification N6-succinyllysine. 3 residues coordinate (R)-2-hydroxyglutarate: R409, T413, and K424. R409 contacts (R)-lactate. R409, T413, and K424 together coordinate (R)-malate. Zn(2+) is bound by residues H457 and H464. A (R)-2-hydroxyglutarate-binding site is contributed by N466. E498 provides a ligand contact to Zn(2+). A (R)-2-hydroxyglutarate-binding site is contributed by H499. H499 contacts (R)-lactate. H499 contributes to the (R)-malate binding site.

This sequence belongs to the FAD-binding oxidoreductase/transferase type 4 family. FAD is required as a cofactor.

It localises to the mitochondrion. The catalysed reaction is (R)-2-hydroxyglutarate + A = 2-oxoglutarate + AH2. It catalyses the reaction (R)-malate + A = oxaloacetate + AH2. Its activity is regulated as follows. Activated by zinc and cobalt ions. In terms of biological role, catalyzes the oxidation of D-2-hydroxyglutarate (D-2-HG) to alpha-ketoglutarate. Also catalyzes the oxidation of other D-2-hydroxyacids, such as D-malate (D-MAL) and D-lactate (D-LAC). Exhibits high activities towards D-2-HG and D-MAL but a very weak activity towards D-LAC. This is D-2-hydroxyglutarate dehydrogenase, mitochondrial (D2HGDH) from Bos taurus (Bovine).